We begin with the raw amino-acid sequence, 1438 residues long: Pyochelin synthetase PchE (1438 aa).

A Carrier 1 domain is found at 6 to 85 (DSRTALRDWL…AWLDLLACAD (80 aa)). Position 46 is an O-(pantetheine 4'-phosphoryl)serine (serine 46). The condensation/cyclization stretch occupies residues 136-442 (RTRDVDPQRL…ARRQGQPRSA (307 aa)). The adenylation stretch occupies residues 563-950 (RAAEAPDADA…GRVDQQVKVR (388 aa)). Residues 1350 to 1425 (EPLEAHEQAL…GLARHLQAQT (76 aa)) enclose the Carrier 2 domain. Serine 1385 carries the O-(pantetheine 4'-phosphoryl)serine modification.

Belongs to the NRP synthetase family. Pantetheine 4'-phosphate serves as cofactor.

It catalyses the reaction holo-[peptidyl-carrier protein] + L-cysteine + ATP = L-cysteinyl-[peptidyl-carrier protein] + AMP + diphosphate. The protein operates within siderophore biosynthesis. Its pathway is antifungal biosynthesis. Functionally, involved in the biosynthesis of the siderophore pyochelin. Accepts salicylate activated by PchD at the first peptidyl carrier domain (ArCP), and activates and fixes one molecule of cysteine at the second peptidyl carrier domain (PCP1) via a thioester linkage to the phosphopanthetheine moiety. Then catalyzes the condensation reaction between the salicylate bound to the first site and the cysteine bound to the second site, and the cyclization of the cysteine to form the salicyl-thiazolinyl-S-PCP1 intermediate at the second site. When this intermediate is released by the action of a thioesterase, it produces the antifungal antibiotic dihydroaeruginoic acid (Dha or hydroxyphenyl-thiazolinyl-carboxylate). The sequence is that of Pyochelin synthetase PchE from Pseudomonas aeruginosa (strain UCBPP-PA14).